Consider the following 146-residue polypeptide: Hemoglobin subunit beta (146 aa).

In terms of domain architecture, Globin spans 2–146; it reads QWSDSERTII…VVMFLGKQYH (145 aa). Heme b is bound by residues His63 and His92.

Belongs to the globin family. In terms of assembly, heterotetramer of two alpha chains and two beta chains. In terms of tissue distribution, red blood cells.

In terms of biological role, involved in oxygen transport from the lung to the various peripheral tissues. The polypeptide is Hemoglobin subunit beta (hbb) (Artedidraco orianae (Barbeled plunderfish)).